A 306-amino-acid polypeptide reads, in one-letter code: UDP-3-O-acyl-N-acetylglucosamine deacetylase (306 aa).

Residues His79, His238, and Asp242 each coordinate Zn(2+). The active-site Proton donor is His265.

Belongs to the LpxC family. The cofactor is Zn(2+).

It carries out the reaction a UDP-3-O-[(3R)-3-hydroxyacyl]-N-acetyl-alpha-D-glucosamine + H2O = a UDP-3-O-[(3R)-3-hydroxyacyl]-alpha-D-glucosamine + acetate. Its pathway is glycolipid biosynthesis; lipid IV(A) biosynthesis; lipid IV(A) from (3R)-3-hydroxytetradecanoyl-[acyl-carrier-protein] and UDP-N-acetyl-alpha-D-glucosamine: step 2/6. In terms of biological role, catalyzes the hydrolysis of UDP-3-O-myristoyl-N-acetylglucosamine to form UDP-3-O-myristoylglucosamine and acetate, the committed step in lipid A biosynthesis. The chain is UDP-3-O-acyl-N-acetylglucosamine deacetylase from Shewanella halifaxensis (strain HAW-EB4).